The following is a 480-amino-acid chain: MVFEFVLSLFNSVSGNHKIIGISYLWLAYWFGMIGFYMSVLIRTELGMSGLKIITMDTLEIYNLLFTLHGLIMVFFNIMTGLFGGIGNYLYPVLLGSCDVVYPRVNLYSLLLQPIGFVLVVSSVYLEIGSGTGWTLYPPLSTSLSNIGIDLIIFGLLAAGIASTLSSINFITTFASIKTIGFVIDRISPAAWSIVLTSFLLLLSLPVVTAVFLMVFFDRNHSTMFFESSNSGDPILYQHLFWFFGHPEVYIMILPGFGIISLLLSTYTTKEMFGNQTMILAMGSIALLGCLVWGHHMYTSGLEADTRGYFTTVTILIALPTGNKIFNWVTTLQCVESIKSLGLILFAVLFIVNFVIGGTTGVVLGNAGLDVVLHDTVYVVGHFHFVLSIGAIISLICFIVYIQRMLFGIILSNRLLSLMAPIFMIAVLFTFLPMHFTGFSPLPRRIPDYPDEMWGWNFICTLGATMMLVLKLTVLFIISL.

Residues 22-42 (ISYLWLAYWFGMIGFYMSVLI) form a helical membrane-spanning segment. Ca(2+) contacts are provided by Glu-45 and Gly-50. 8 consecutive transmembrane segments (helical) span residues 64-84 (LLFT…GLFG), 109-129 (SLLL…LEIG), 151-171 (LIIF…INFI), 194-214 (IVLT…VFLM), 240-260 (LFWF…FGII), 278-298 (MILA…HHMY), 309-329 (YFTT…FNWV), and 343-363 (LILF…TGVV). His-69 contacts Fe(II)-heme a. Residue His-246 coordinates Cu cation. Residues 246-250 (HPEVY) constitute a cross-link (1'-histidyl-3'-tyrosine (His-Tyr)). O2 is bound at residue Tyr-250. The Cu cation site is built by His-295 and His-296. Mg(2+) is bound by residues His-374 and Asp-375. A heme a3-binding site is contributed by His-382. A run of 2 helical transmembrane segments spans residues 382-402 (HFHF…IVYI) and 416-436 (LSLM…PMHF). His-384 provides a ligand contact to Fe(II)-heme a. Residue Pro-447 participates in Ca(2+) binding. Residues 458–478 (FICTLGATMMLVLKLTVLFII) traverse the membrane as a helical segment.

Belongs to the heme-copper respiratory oxidase family. In terms of assembly, component of the cytochrome c oxidase (complex IV, CIV), a multisubunit enzyme composed of a catalytic core of 3 subunits and several supernumerary subunits. The complex exists as a monomer or a dimer and forms supercomplexes (SCs) in the inner mitochondrial membrane with ubiquinol-cytochrome c oxidoreductase (cytochrome b-c1 complex, complex III, CIII). It depends on heme as a cofactor. Requires Cu cation as cofactor.

The protein localises to the mitochondrion inner membrane. The catalysed reaction is 4 Fe(II)-[cytochrome c] + O2 + 8 H(+)(in) = 4 Fe(III)-[cytochrome c] + 2 H2O + 4 H(+)(out). It participates in energy metabolism; oxidative phosphorylation. Component of the cytochrome c oxidase, the last enzyme in the mitochondrial electron transport chain which drives oxidative phosphorylation. The respiratory chain contains 3 multisubunit complexes succinate dehydrogenase (complex II, CII), ubiquinol-cytochrome c oxidoreductase (cytochrome b-c1 complex, complex III, CIII) and cytochrome c oxidase (complex IV, CIV), that cooperate to transfer electrons derived from NADH and succinate to molecular oxygen, creating an electrochemical gradient over the inner membrane that drives transmembrane transport and the ATP synthase. Cytochrome c oxidase is the component of the respiratory chain that catalyzes the reduction of oxygen to water. Electrons originating from reduced cytochrome c in the intermembrane space (IMS) are transferred via the dinuclear copper A center (CU(A)) of subunit 2 and heme A of subunit 1 to the active site in subunit 1, a binuclear center (BNC) formed by heme A3 and copper B (CU(B)). The BNC reduces molecular oxygen to 2 water molecules using 4 electrons from cytochrome c in the IMS and 4 protons from the mitochondrial matrix. The chain is Cytochrome c oxidase subunit 1 (MT-CO1) from Theileria annulata.